Reading from the N-terminus, the 206-residue chain is Probable GTP-binding protein EngB (206 aa).

The EngB-type G domain occupies 7 to 195 (DCDEVVLLGR…EEALQAIFSD (189 aa)). Residues 15-22 (GRSNVGKS), 41-45 (GVTRS), 60-63 (DLPG), 140-143 (NKID), and 175-177 (ISA) contribute to the GTP site. Residues S22 and T43 each contribute to the Mg(2+) site.

This sequence belongs to the TRAFAC class TrmE-Era-EngA-EngB-Septin-like GTPase superfamily. EngB GTPase family. The cofactor is Mg(2+).

Its function is as follows. Necessary for normal cell division and for the maintenance of normal septation. The polypeptide is Probable GTP-binding protein EngB (Haloquadratum walsbyi (strain DSM 16790 / HBSQ001)).